We begin with the raw amino-acid sequence, 152 residues long: Arginine repressor (152 aa).

Belongs to the ArgR family.

The protein resides in the cytoplasm. The protein operates within amino-acid biosynthesis; L-arginine biosynthesis [regulation]. Its function is as follows. Regulates arginine biosynthesis genes. The protein is Arginine repressor of Lactococcus lactis subsp. lactis (strain IL1403) (Streptococcus lactis).